The following is a 786-amino-acid chain: Digalactosyldiacylglycerol synthase 1, chloroplastic (786 aa).

The N-terminal 25 residues, 1 to 25 (MASQRQPPSSSNAFSFLSKGWREVR), are a transit peptide targeting the chloroplast.

This sequence belongs to the glycosyltransferase group 1 family. Glycosyltransferase 4 subfamily. In terms of tissue distribution, high expression in nodules infected cells, but low in nodule inner cortex and root central cylinder.

The protein localises to the plastid. It is found in the chloroplast outer membrane. The protein resides in the plastid outer membrane. It carries out the reaction a 1,2-diacyl-3-O-(beta-D-galactosyl)-sn-glycerol + UDP-alpha-D-galactose = a 1,2-diacyl-3-O-[alpha-D-galactosyl-(1-&gt;6)-beta-D-galactosyl]-sn-glycerol + UDP + H(+). In terms of biological role, involved in the synthesis of diacylglycerol galactolipids that are specifically found in thylakoid and in nodule peribacteroid membranes. Specific for alpha-glycosidic linkages. This chain is Digalactosyldiacylglycerol synthase 1, chloroplastic, found in Lotus japonicus (Lotus corniculatus var. japonicus).